The chain runs to 464 residues: MLAARRLLGGSLPSRVSVRFSGDTTAPKKTSFGSLKDEDRIFTNLYGRHDWRLKGALSRGDWYKTKEILLKGPDWILGEIKTSGLRGRGGAGFPTGLKWSFMNKPSDGRPKYLVVNADEGEPGTCKDREIIRHDPHKLVEGCLVGGRAMGARAAYIYIRGEFYNEASNLQVAIREAYEAGLIGKNACGSGYDFDVFVVRGAGAYICGEETALIESIEGKQGKPRLKPPFPADVGVFGCPTTVANVETVAVSPTICRRGGTWFAGFGRERNSGTKLFNISGHVNHPCTVEEEMSVPLKELIEKHAGGVTGGWDNLLAVIPGGSSTPLIPKSVCETVLMDFDALVQAQTGLGTAAVIVMDRSTDIVKAIARLIEFYKYESCGQCTPCREGVDWMNKVMARFVRGDARPAEIDSLWEISKQIEGHTICALGDGAAWPVQGLIRHFRPELEERMQRFAQQHQARQAAS.

The transit peptide at 1–20 directs the protein to the mitochondrion; it reads MLAARRLLGGSLPSRVSVRF. Position 81 is an N6-acetyllysine; alternate (lysine 81). Lysine 81 is subject to N6-succinyllysine; alternate. 87–96 provides a ligand contact to NADH; sequence GRGGAGFPTG. The residue at position 104 (lysine 104) is an N6-acetyllysine. Position 199 to 247 (199 to 247) interacts with FMN; the sequence is RGAGAYICGEETALIESIEGKQGKPRLKPPFPADVGVFGCPTTVANVET. Arginine 257 carries the omega-N-methylarginine modification. Lysine 375 is modified (N6-acetyllysine). Residues cysteine 379, cysteine 382, cysteine 385, and cysteine 425 each coordinate [4Fe-4S] cluster.

It belongs to the complex I 51 kDa subunit family. In terms of assembly, core subunit of respiratory chain NADH dehydrogenase (Complex I) which is composed of 45 different subunits. This is a component of the flavoprotein-sulfur (FP) fragment of the enzyme. Interacts with RAB5IF. The cofactor is FMN. Requires [4Fe-4S] cluster as cofactor.

Its subcellular location is the mitochondrion inner membrane. It catalyses the reaction a ubiquinone + NADH + 5 H(+)(in) = a ubiquinol + NAD(+) + 4 H(+)(out). Functionally, core subunit of the mitochondrial membrane respiratory chain NADH dehydrogenase (Complex I) which catalyzes electron transfer from NADH through the respiratory chain, using ubiquinone as an electron acceptor. Part of the peripheral arm of the enzyme, where the electrons from NADH are accepted by flavin mononucleotide (FMN) and then passed along a chain of iron-sulfur clusters by electron tunnelling to the final acceptor ubiquinone. Contains FMN, which is the initial electron acceptor as well as one iron-sulfur cluster. The protein is NADH dehydrogenase [ubiquinone] flavoprotein 1, mitochondrial of Macaca fascicularis (Crab-eating macaque).